The chain runs to 213 residues: Uridine kinase (213 aa).

15 to 22 contributes to the ATP binding site; it reads GGSGSGKT.

The protein belongs to the uridine kinase family.

The protein resides in the cytoplasm. It carries out the reaction uridine + ATP = UMP + ADP + H(+). The enzyme catalyses cytidine + ATP = CMP + ADP + H(+). The protein operates within pyrimidine metabolism; CTP biosynthesis via salvage pathway; CTP from cytidine: step 1/3. Its pathway is pyrimidine metabolism; UMP biosynthesis via salvage pathway; UMP from uridine: step 1/1. The polypeptide is Uridine kinase (Ligilactobacillus salivarius (strain UCC118) (Lactobacillus salivarius)).